Consider the following 159-residue polypeptide: Large ribosomal subunit protein uL22 (159 aa).

The protein belongs to the universal ribosomal protein uL22 family. Part of the 50S ribosomal subunit.

Functionally, this protein binds specifically to 23S rRNA. It makes multiple contacts with different domains of the 23S rRNA in the assembled 50S subunit and ribosome. Its function is as follows. The globular domain of the protein is located near the polypeptide exit tunnel on the outside of the subunit, while an extended beta-hairpin is found that lines the wall of the exit tunnel in the center of the 70S ribosome. This is Large ribosomal subunit protein uL22 from Ignicoccus hospitalis (strain KIN4/I / DSM 18386 / JCM 14125).